A 209-amino-acid chain; its full sequence is Thymidylate kinase (209 aa).

Residue 10 to 17 (GPEGAGKT) coordinates ATP.

The protein belongs to the thymidylate kinase family.

The enzyme catalyses dTMP + ATP = dTDP + ADP. Its function is as follows. Phosphorylation of dTMP to form dTDP in both de novo and salvage pathways of dTTP synthesis. This is Thymidylate kinase from Anoxybacillus flavithermus (strain DSM 21510 / WK1).